A 301-amino-acid chain; its full sequence is UDP-N-acetylenolpyruvoylglucosamine reductase (301 aa).

One can recognise an FAD-binding PCMH-type domain in the interval 26 to 193; sequence KTGGPAQYLA…VSATFGLEPG (168 aa). Arg172 is a catalytic residue. Ser222 acts as the Proton donor in catalysis. Residue Glu292 is part of the active site.

Belongs to the MurB family. It depends on FAD as a cofactor.

It localises to the cytoplasm. The catalysed reaction is UDP-N-acetyl-alpha-D-muramate + NADP(+) = UDP-N-acetyl-3-O-(1-carboxyvinyl)-alpha-D-glucosamine + NADPH + H(+). It functions in the pathway cell wall biogenesis; peptidoglycan biosynthesis. In terms of biological role, cell wall formation. The protein is UDP-N-acetylenolpyruvoylglucosamine reductase of Lactobacillus johnsonii (strain CNCM I-12250 / La1 / NCC 533).